Consider the following 27-residue polypeptide: uncharacterized protein (27 aa).

Its subcellular location is the mitochondrion. This is an uncharacterized protein from Emericella nidulans (Aspergillus nidulans).